We begin with the raw amino-acid sequence, 321 residues long: Anthranilate phosphoribosyltransferase (321 aa).

Residues glycine 72, 75 to 76 (GD), threonine 80, 82 to 85 (NVST), 99 to 107 (KHGNVSITS), and serine 111 contribute to the 5-phospho-alpha-D-ribose 1-diphosphate site. Glycine 72 is an anthranilate binding site. Serine 84 is a Mg(2+) binding site. Asparagine 102 is an anthranilate binding site. Residue arginine 157 coordinates anthranilate. Residues aspartate 216 and glutamate 217 each coordinate Mg(2+).

It belongs to the anthranilate phosphoribosyltransferase family. As to quaternary structure, homodimer. Mg(2+) serves as cofactor.

It catalyses the reaction N-(5-phospho-beta-D-ribosyl)anthranilate + diphosphate = 5-phospho-alpha-D-ribose 1-diphosphate + anthranilate. It functions in the pathway amino-acid biosynthesis; L-tryptophan biosynthesis; L-tryptophan from chorismate: step 2/5. Its function is as follows. Catalyzes the transfer of the phosphoribosyl group of 5-phosphorylribose-1-pyrophosphate (PRPP) to anthranilate to yield N-(5'-phosphoribosyl)-anthranilate (PRA). The chain is Anthranilate phosphoribosyltransferase from Methanococcus maripaludis (strain C5 / ATCC BAA-1333).